A 624-amino-acid chain; its full sequence is tRNA uridine 5-carboxymethylaminomethyl modification enzyme MnmG (624 aa).

Residues 13–18, valine 125, and serine 180 each bind FAD; that span reads GAGHAG. 272 to 286 contacts NAD(+); it reads GPRYCPSIEDKVVKF. Glutamine 369 lines the FAD pocket.

Belongs to the MnmG family. In terms of assembly, homodimer. Heterotetramer of two MnmE and two MnmG subunits. Requires FAD as cofactor.

Its subcellular location is the cytoplasm. Its function is as follows. NAD-binding protein involved in the addition of a carboxymethylaminomethyl (cmnm) group at the wobble position (U34) of certain tRNAs, forming tRNA-cmnm(5)s(2)U34. This chain is tRNA uridine 5-carboxymethylaminomethyl modification enzyme MnmG, found in Thermodesulfovibrio yellowstonii (strain ATCC 51303 / DSM 11347 / YP87).